Reading from the N-terminus, the 450-residue chain is Methionine aminopeptidase 2-2 (450 aa).

Basic and acidic residues-rich tracts occupy residues 1-10 and 30-39; these read MGAKISEDHP and RGAHLSRDGD. The disordered stretch occupies residues 1-100; sequence MGAKISEDHP…PPRVPLSELF (100 aa). The segment covering 47–56 has biased composition (acidic residues); sequence GDDDDDDDEG. A compositionally biased stretch (basic residues) spans 69–86; sequence KKKKKKRKPKKKKAKKAT. Position 211 (H211) interacts with substrate. A divalent metal cation contacts are provided by D232, D243, and H302. H310 is a substrate binding site. Residues E335 and E431 each coordinate a divalent metal cation.

The protein belongs to the peptidase M24A family. Methionine aminopeptidase eukaryotic type 2 subfamily. Co(2+) serves as cofactor. The cofactor is Zn(2+). Requires Mn(2+) as cofactor. Fe(2+) is required as a cofactor.

It is found in the cytoplasm. It carries out the reaction Release of N-terminal amino acids, preferentially methionine, from peptides and arylamides.. In terms of biological role, cotranslationally removes the N-terminal methionine from nascent proteins. The N-terminal methionine is often cleaved when the second residue in the primary sequence is small and uncharged (Met-Ala-, Cys, Gly, Pro, Ser, Thr, or Val). This chain is Methionine aminopeptidase 2-2, found in Fusarium vanettenii (strain ATCC MYA-4622 / CBS 123669 / FGSC 9596 / NRRL 45880 / 77-13-4) (Fusarium solani subsp. pisi).